Reading from the N-terminus, the 435-residue chain is Trigger factor (435 aa).

Residues 163–248 (GELASVTFSA…VHAVKERKMP (86 aa)) form the PPIase FKBP-type domain.

This sequence belongs to the FKBP-type PPIase family. Tig subfamily.

It localises to the cytoplasm. It catalyses the reaction [protein]-peptidylproline (omega=180) = [protein]-peptidylproline (omega=0). Functionally, involved in protein export. Acts as a chaperone by maintaining the newly synthesized protein in an open conformation. Functions as a peptidyl-prolyl cis-trans isomerase. The sequence is that of Trigger factor from Maridesulfovibrio salexigens (strain ATCC 14822 / DSM 2638 / NCIMB 8403 / VKM B-1763) (Desulfovibrio salexigens).